The primary structure comprises 438 residues: Enolase 1 (438 aa).

2 residues coordinate substrate: His160 and Glu169. Glu212 (proton donor) is an active-site residue. Asp247, Glu296, and Asp321 together coordinate Mg(2+). The substrate site is built by Glu296 and Asp321. Lys346 acts as the Proton acceptor in catalysis. Residues 373–376 and Lys397 each bind substrate; that span reads SHRS.

Belongs to the enolase family. In terms of assembly, homodimer. The cofactor is Mg(2+).

It is found in the cytoplasm. It catalyses the reaction (2R)-2-phosphoglycerate = phosphoenolpyruvate + H2O. It functions in the pathway carbohydrate degradation; glycolysis; pyruvate from D-glyceraldehyde 3-phosphate: step 4/5. This Candida glabrata (strain ATCC 2001 / BCRC 20586 / JCM 3761 / NBRC 0622 / NRRL Y-65 / CBS 138) (Yeast) protein is Enolase 1 (ENO1).